A 70-amino-acid chain; its full sequence is UPF0352 protein PBPRA2586 (70 aa).

Belongs to the UPF0352 family.

In Photobacterium profundum (strain SS9), this protein is UPF0352 protein PBPRA2586.